Consider the following 142-residue polypeptide: UPF0336 protein PPA1896 (142 aa).

Belongs to the UPF0336 family.

The sequence is that of UPF0336 protein PPA1896 from Cutibacterium acnes (strain DSM 16379 / KPA171202) (Propionibacterium acnes).